The primary structure comprises 145 residues: Probable D-aminoacyl-tRNA deacylase (145 aa).

It belongs to the DTD family. Homodimer.

It localises to the cytoplasm. It carries out the reaction glycyl-tRNA(Ala) + H2O = tRNA(Ala) + glycine + H(+). The enzyme catalyses a D-aminoacyl-tRNA + H2O = a tRNA + a D-alpha-amino acid + H(+). Functionally, an aminoacyl-tRNA editing enzyme that deacylates mischarged D-aminoacyl-tRNAs. Also deacylates mischarged glycyl-tRNA(Ala), protecting cells against glycine mischarging by AlaRS. Acts via tRNA-based rather than protein-based catalysis; rejects L-amino acids rather than detecting D-amino acids in the active site. By recycling D-aminoacyl-tRNA to D-amino acids and free tRNA molecules, this enzyme counteracts the toxicity associated with the formation of D-aminoacyl-tRNA entities in vivo and helps enforce protein L-homochirality. This is Probable D-aminoacyl-tRNA deacylase from Shigella flexneri serotype 5b (strain 8401).